Here is a 142-residue protein sequence, read N- to C-terminus: Fluoride-specific ion channel FluC 1 (142 aa).

4 helical membrane passes run 17–37 (AWVSAGSVVGGLTRYLVGLAL), 42–62 (GFPFATLFINATGSLIIGFYA), 80–100 (FVMTGFCGGYTTFSAFSLETF), and 109–129 (YIALAYVASSVVCWLVSVWLG). Residues G87 and T90 each coordinate Na(+).

Belongs to the fluoride channel Fluc/FEX (TC 1.A.43) family.

The protein resides in the cell inner membrane. It catalyses the reaction fluoride(in) = fluoride(out). Na(+) is not transported, but it plays an essential structural role and its presence is essential for fluoride channel function. Its function is as follows. Fluoride-specific ion channel. Important for reducing fluoride concentration in the cell, thus reducing its toxicity. The polypeptide is Fluoride-specific ion channel FluC 1 (Bradyrhizobium diazoefficiens (strain JCM 10833 / BCRC 13528 / IAM 13628 / NBRC 14792 / USDA 110)).